Consider the following 1487-residue polypeptide: Murinoglobulin-1 (1487 aa).

The first 24 residues, 1 to 24, serve as a signal peptide directing secretion; it reads MKKNREAQLCLFSALLAFLPFASL. The cysteines at positions 48 and 86 are disulfide-linked. N-linked (GlcNAc...) asparagine glycosylation is found at Asn55 and Asn247. 2 disulfide bridges follow: Cys251-Cys283 and Cys269-Cys295. Asn301, Asn321, Asn393, and Asn508 each carry an N-linked (GlcNAc...) asparagine glycan. Disulfide bonds link Cys468–Cys563, Cys595–Cys784, and Cys643–Cys689. The interval 686-745 is bait region; sequence PTYCYEMNMVVLSAPAVESELSPRGGEFEMMPLGVNKSPLPKEPPRKDPPPKDPVIETIR. N-linked (GlcNAc...) asparagine glycosylation is found at Asn760, Asn787, and Asn882. Cystine bridges form between Cys860-Cys896, Cys934-Cys1334, Cys1092-Cys1140, and Cys1365-Cys1480. The segment at residues 985-988 is a cross-link (isoglutamyl cysteine thioester (Cys-Gln)); sequence CGEQ. The N-linked (GlcNAc...) asparagine glycan is linked to Asn1004. N-linked (GlcNAc...) asparagine glycans are attached at residues Asn1153, Asn1324, and Asn1437.

The protein belongs to the protease inhibitor I39 (alpha-2-macroglobulin) family. As to quaternary structure, monomer. Plasma.

The protein resides in the secreted. A proteinase activates the inhibitor by specific proteolysis in the bait region, which, by an unknown mechanism leads to reaction at the cysteinyl-glutamyl internal thiol ester site and to a conformational change, whereby the proteinase is trapped and/or covalently bound to the inhibitor. While in the tetrameric proteinase inhibitors steric inhibition is sufficiently strong, monomeric forms need a covalent linkage between the activated glutamyl residue of the original thiol ester and a terminal amino group of a lysine or another nucleophilic group on the proteinase, for inhibition to be effective. This is Murinoglobulin-1 from Rattus norvegicus (Rat).